The following is a 350-amino-acid chain: Ornithine cyclodeaminase (350 aa).

2 residues coordinate L-ornithine: arginine 45 and lysine 69. Residues threonine 84, arginine 112, 139 to 140 (AQ), aspartate 161, threonine 202, 225 to 228 (VGGD), lysine 232, and serine 293 each bind NAD(+). Arginine 112 lines the L-ornithine pocket. Aspartate 228 serves as a coordination point for L-ornithine. The active-site Proton donor/acceptor is aspartate 228. Valine 294 is an L-ornithine binding site. Lysine 331 is an NAD(+) binding site.

It belongs to the ornithine cyclodeaminase/mu-crystallin family. As to quaternary structure, homodimer. The cofactor is NAD(+).

It carries out the reaction L-ornithine = L-proline + NH4(+). Its pathway is amino-acid biosynthesis; L-proline biosynthesis; L-proline from L-ornithine: step 1/1. Catalyzes the conversion of L-ornithine into L-proline with release of ammonia. Is likely involved in the L-ornithine degradation pathway that allows P.putida to utilize this compound as sole carbon and nitrogen source. This is Ornithine cyclodeaminase from Pseudomonas putida (strain ATCC 47054 / DSM 6125 / CFBP 8728 / NCIMB 11950 / KT2440).